A 197-amino-acid chain; its full sequence is MKIGYARVSTGLQNLNLQEDRLNAYGSEKIFSDHISGSKSKRPGLDKAIEFARSGDTIVVWRLDRLGRNMEDLITLVNELNERGVSFHSLEENITMDKSTSTGQLLFHLFAAFAEFERNLILERSSAGRIAARARGRYGGRPEKLNQKDLNLLKTLYDNGTPIKTIAEQWQVSRTTIYRYLNKLEEKEDEKQGEVSN.

The Resolvase/invertase-type recombinase catalytic domain occupies 1 to 136 (MKIGYARVST…AGRIAARARG (136 aa)). S9 functions as the O-(5'-phospho-DNA)-serine intermediate in the catalytic mechanism. Positions 163 to 182 (IKTIAEQWQVSRTTIYRYLN) form a DNA-binding region, H-T-H motif.

This sequence belongs to the site-specific recombinase resolvase family.

In terms of biological role, resolvase catalyzes the resolution (a site-specific recombination) of the cointegrated replicon to yield the final transposition products. This chain is Transposon Tn552 resolvase (tnpR), found in Staphylococcus aureus.